A 210-amino-acid chain; its full sequence is uncharacterized protein (210 aa).

A signal peptide spans 1 to 21 (MLKMNVKKALVILVALALVAA).

This is an uncharacterized protein from Archaeoglobus fulgidus (strain ATCC 49558 / DSM 4304 / JCM 9628 / NBRC 100126 / VC-16).